We begin with the raw amino-acid sequence, 363 residues long: 3-methyl-D-ornithine--L-lysine ligase (363 aa).

Lysine 10 provides a ligand contact to ATP. 11 to 12 (LQ) serves as a coordination point for L-lysine. ATP is bound by residues aspartate 31, 49 to 50 (DV), and 72 to 73 (EN). Glutamate 72 is a binding site for L-lysine. ADP contacts are provided by residues lysine 104, lysine 131, serine 138, and 160-163 (EEYV). D-ornithine is bound by residues 169–171 (SLE) and aspartate 225. Mg(2+) is bound by residues glutamate 227, glutamate 239, and aspartate 241. Glutamate 239 provides a ligand contact to ADP. D-ornithine contacts are provided by residues 243–248 (RFPSQT) and glutamate 302. The L-lysine site is built by serine 246 and glutamate 302.

It belongs to the PylC family. Mg(2+) serves as cofactor.

The enzyme catalyses (3R)-3-methyl-D-ornithine + L-lysine + ATP = (3R)-3-methyl-D-ornithyl-N(6)-L-lysine + ADP + phosphate + H(+). The protein operates within amino-acid biosynthesis; L-pyrrolysine biosynthesis. Is required for the biosynthesis of pyrrolysine. Catalyzes the ATP-dependent ligation between (3R)-3-methyl-D-ornithine and L-lysine, leading to (3R)-3-methyl-D-ornithyl-N6-L-lysine. This Methanosarcina barkeri (strain Fusaro / DSM 804) protein is 3-methyl-D-ornithine--L-lysine ligase.